Reading from the N-terminus, the 357-residue chain is Histidinol-phosphate aminotransferase (357 aa).

Lys212 carries the N6-(pyridoxal phosphate)lysine modification.

Belongs to the class-II pyridoxal-phosphate-dependent aminotransferase family. Histidinol-phosphate aminotransferase subfamily. As to quaternary structure, homodimer. It depends on pyridoxal 5'-phosphate as a cofactor.

It catalyses the reaction L-histidinol phosphate + 2-oxoglutarate = 3-(imidazol-4-yl)-2-oxopropyl phosphate + L-glutamate. It participates in amino-acid biosynthesis; L-histidine biosynthesis; L-histidine from 5-phospho-alpha-D-ribose 1-diphosphate: step 7/9. The sequence is that of Histidinol-phosphate aminotransferase from Pectobacterium atrosepticum (strain SCRI 1043 / ATCC BAA-672) (Erwinia carotovora subsp. atroseptica).